The sequence spans 373 residues: Alcohol dehydrogenase 2 (373 aa).

Zn(2+) is bound by residues cysteine 47, threonine 49, histidine 69, cysteine 99, cysteine 102, cysteine 105, cysteine 113, and cysteine 177. Residues threonine 49 and histidine 69 each contribute to the an alcohol site. Threonine 49 is an NAD(+) binding site. Residues 202–207 (GLGAVG), aspartate 226, lysine 231, threonine 272, phenylalanine 316, and arginine 366 each bind NAD(+).

Belongs to the zinc-containing alcohol dehydrogenase family. In terms of assembly, homodimer. Requires Zn(2+) as cofactor.

It localises to the cytoplasm. The catalysed reaction is a primary alcohol + NAD(+) = an aldehyde + NADH + H(+). It carries out the reaction a secondary alcohol + NAD(+) = a ketone + NADH + H(+). This chain is Alcohol dehydrogenase 2 (ADH2), found in Hordeum vulgare (Barley).